A 635-amino-acid chain; its full sequence is Sodium- and chloride-dependent creatine transporter 1 (635 aa).

The interval 1–27 (MAKKSAENGIYSVSGDEKKGPLIVSGP) is disordered. The Cytoplasmic segment spans residues 1–60 (MAKKSAENGIYSVSGDEKKGPLIVSGPDGAPAKGDGPAGLGAPGGRLAVPPRETWTRQMD). A helical membrane pass occupies residues 61 to 81 (FIMSCVGFAVGLGNVWRFPYL). The Extracellular segment spans residues 82–87 (CYKNGG). A helical membrane pass occupies residues 88–108 (GVFLIPYVLIALVGGIPIFFL). Topologically, residues 109–138 (EISLGQFMKAGSINVWNICPLFKGLGYASM) are cytoplasmic. A helical membrane pass occupies residues 139–159 (VIVFYCNTYYIMVLAWGFYYL). Over 160–230 (VKSFTTTLPW…LSTGLEVPGA (71 aa)) the chain is Extracellular. Residues Asn192 and Asn197 are each glycosylated (N-linked (GlcNAc...) asparagine). Residues 231–251 (LNWEVTLCLLACWVLVYFCVW) form a helical membrane-spanning segment. Residues 252–269 (KGVKSTGKIVYFTATFPY) lie on the Cytoplasmic side of the membrane. A helical membrane pass occupies residues 270–290 (VVLVVLLVRGVLLPGALDGII). Topologically, residues 291–304 (YYLKPDWSKLGSPQ) are extracellular. A helical membrane pass occupies residues 305–325 (VWIDAGTQIFFSYAIGLGALT). Residues 326-341 (ALGSYNRFNNNCYKDA) lie on the Cytoplasmic side of the membrane. The chain crosses the membrane as a helical span at residues 342-362 (IILALINSGTSFFAGFVVFSI). Topologically, residues 363-394 (LGFMATEQGVHISKVAESGPGLAFIAYPRAVT) are extracellular. Residues 395 to 415 (LMPVAPLWAALFFFMLLLLGL) traverse the membrane as a helical segment. Topologically, residues 416 to 444 (DSQFVGVEGFITGLLDLLPASYYFRFQRE) are cytoplasmic. Residues 445–465 (ISVALCCALCFVIDLSMVTDG) traverse the membrane as a helical segment. Residues 466-479 (GMYVFQLFDYYSAS) lie on the Extracellular side of the membrane. The helical transmembrane segment at 480 to 500 (GTTLLWQAFWECVVVAWVYGA) threads the bilayer. Residues 501-520 (DRFMDDIACMIGYRPCPWMK) are Cytoplasmic-facing. Residues 521–541 (WCWSFFTPLVCMGIFIFNIVY) traverse the membrane as a helical segment. Over 542–560 (YEPLVYNNTYVYPWWGEAM) the chain is Extracellular. N-linked (GlcNAc...) asparagine glycosylation occurs at Asn548. Residues 561–581 (GWAFALSSMLCVPLHLLGCLL) form a helical membrane-spanning segment. Over 582 to 635 (RAKGTMAERWQHLTQPIWGLHHLEYRAQDADVRGLTTLTPVSESSKVVVVESVM) the chain is Cytoplasmic. Thr617 and Thr620 each carry phosphothreonine. Residue Ser623 is modified to Phosphoserine.

Belongs to the sodium:neurotransmitter symporter (SNF) (TC 2.A.22) family. SLC6A8 subfamily. Glycosylated. In terms of tissue distribution, brain. Highly expressed in brain capillaries branching in all cortical layers and moderately expressed in neuronal perikarya (at protein level).

It is found in the cell membrane. The protein localises to the apical cell membrane. It catalyses the reaction creatine(out) + chloride(out) + 2 Na(+)(out) = creatine(in) + chloride(in) + 2 Na(+)(in). Its function is as follows. Creatine:sodium symporter which mediates the uptake of creatine. Plays an important role in supplying creatine to the brain via the blood-brain barrier. The sequence is that of Sodium- and chloride-dependent creatine transporter 1 (Slc6a8) from Mus musculus (Mouse).